Here is a 204-residue protein sequence, read N- to C-terminus: Inner membrane-spanning protein YciB (204 aa).

Helical transmembrane passes span A3–F23, I45–I65, L70–W90, L107–F127, W145–T165, and W168–M188.

The protein belongs to the YciB family.

Its subcellular location is the cell inner membrane. Plays a role in cell envelope biogenesis, maintenance of cell envelope integrity and membrane homeostasis. The sequence is that of Inner membrane-spanning protein YciB from Agrobacterium fabrum (strain C58 / ATCC 33970) (Agrobacterium tumefaciens (strain C58)).